We begin with the raw amino-acid sequence, 193 residues long: Large ribosomal subunit protein uL5 (193 aa).

The protein belongs to the universal ribosomal protein uL5 family. As to quaternary structure, part of the 50S ribosomal subunit; part of the 5S rRNA/L5/L18/L25 subcomplex. Contacts the 5S rRNA and the P site tRNA. Forms a bridge to the 30S subunit in the 70S ribosome.

Its function is as follows. This is one of the proteins that bind and probably mediate the attachment of the 5S RNA into the large ribosomal subunit, where it forms part of the central protuberance. In the 70S ribosome it contacts protein S13 of the 30S subunit (bridge B1b), connecting the 2 subunits; this bridge is implicated in subunit movement. Contacts the P site tRNA; the 5S rRNA and some of its associated proteins might help stabilize positioning of ribosome-bound tRNAs. This Renibacterium salmoninarum (strain ATCC 33209 / DSM 20767 / JCM 11484 / NBRC 15589 / NCIMB 2235) protein is Large ribosomal subunit protein uL5.